A 152-amino-acid chain; its full sequence is Transcriptional regulator MraZ (152 aa).

SpoVT-AbrB domains lie at 5–52 and 81–124; these read ATLV…PLPE and ASEC…DETT.

This sequence belongs to the MraZ family. As to quaternary structure, forms oligomers.

Its subcellular location is the cytoplasm. It localises to the nucleoid. Negatively regulates its own expression and that of the subsequent genes in the proximal part of the division and cell wall (dcw) gene cluster. Acts by binding directly to DNA. May also regulate the expression of genes outside the dcw cluster. The protein is Transcriptional regulator MraZ of Salmonella gallinarum (strain 287/91 / NCTC 13346).